We begin with the raw amino-acid sequence, 1711 residues long: Receptor-type tyrosine-protein phosphatase V (1711 aa).

Residues 1 to 17 (MRPLILLAALLWLQGFL) form the signal peptide. Residues 18-1074 (AEDDACSSLE…SEPRASISLA (1057 aa)) lie on the Extracellular side of the membrane. 10 Fibronectin type-III domains span residues 37–129 (PLLS…TAPT), 130–222 (VVRG…VPPD), 218–305 (PVPP…EWTY), 306–391 (PSYP…LAES), 393–470 (ALPR…ISGY), 475–569 (PPQS…APPT), 565–654 (PAPP…TGWT), 655–749 (PPSA…IPNE), 744–831 (PLIP…VLSV), and 832–926 (EPGP…SAEA). N-linked (GlcNAc...) asparagine glycosylation is found at N42, N74, N89, N117, N174, N239, and N259. The N-linked (GlcNAc...) asparagine glycan is linked to N431. N570, N620, N649, N663, and N737 each carry an N-linked (GlcNAc...) asparagine glycan. N-linked (GlcNAc...) asparagine glycans are attached at residues N851, N882, N970, and N982. The chain crosses the membrane as a helical span at residues 1075–1095 (IIPLTVMLGAVVGSIVIVCAV). The Cytoplasmic portion of the chain corresponds to 1096–1711 (LCLLRWRCLK…PRAGKWPAPC (616 aa)). Tyrosine-protein phosphatase domains lie at 1150–1409 (FFQE…LLNK) and 1427–1696 (DFAQ…LNSA). Substrate contacts are provided by residues D1316, 1350–1356 (CSAGVGR), and Q1394. C1350 functions as the Phosphocysteine intermediate in the catalytic mechanism.

Belongs to the protein-tyrosine phosphatase family. Receptor class 3 subfamily. In terms of processing, the cytoplasmic domain contains potential phosphorylation sites. As to expression, bone and testis. In the latter, restricted to the basal portion of the seminiferous tubule.

The protein localises to the membrane. It catalyses the reaction O-phospho-L-tyrosyl-[protein] + H2O = L-tyrosyl-[protein] + phosphate. In terms of biological role, protein tyrosine phosphatase that acts as a regulator of energy metabolism. Prevents decarboxylation of osteocalcin (Bglap) via an indirect mechanism, preventing the hormone activity of osteocalcin. Functions in signaling pathways during bone remodeling, as well as serve a broader role in cell interactions associated with differentiation in bone and testis. Associated with differentiation in bone and testis. The sequence is that of Receptor-type tyrosine-protein phosphatase V (Ptprv) from Rattus norvegicus (Rat).